The sequence spans 393 residues: MKKLLKSVLVFAALSSASSLQALPVGNPAEPSLMIDGILWEGFGGDPCDPCATWCDAISMRVGYYGDFVFDRVLKTDVNKEFQMGAKPTTDTGNSAAPSTLTARENPAYGRHMQDAEMFTNAACMALNIWDRFDVFCTLGATSGYLKGNSASFNLVGLFGDNENQKTVKAESVPNMSFDQSVVELYTDTTFAWSVGARAALWECGCATLGASFQYAQSKPKVEELNVLCNAAEFTINKPKGYVGKEFPLDLTAGTDAATGTKDASIDYHEWQASLALSYRLNMFTPYIGVKWSRASFDADTIRIAQPKSATAIFDTTTLNPTIAGAGDVKTGAEGQLGDTMQIVSLQLNKMKSRKSCGIAVGTTIVDADKYAVTVETRLIDERAAHVNAQFRF.

Residues 1-22 form the signal peptide; that stretch reads MKKLLKSVLVFAALSSASSLQA.

Belongs to the chlamydial porin (CP) (TC 1.B.2) family. As to quaternary structure, part of a disulfide cross-linked outer membrane complex (COMC) composed of the major outer membrane porin (MOMP), the small cysteine-rich protein (OmcA) and the large cysteine-rich periplasmic protein (OmcB).

The protein localises to the cell outer membrane. Functionally, in elementary bodies (EBs, the infectious stage, which is able to survive outside the host cell) provides the structural integrity of the outer envelope through disulfide cross-links with the small cysteine-rich protein and the large cysteine-rich periplasmic protein. It has been described in publications as the Sarkosyl-insoluble COMC (Chlamydia outer membrane complex), and serves as the functional equivalent of peptidoglycan. In terms of biological role, permits diffusion of specific solutes through the outer membrane. The chain is Major outer membrane porin, serovar D (ompA) from Chlamydia trachomatis serovar D (strain ATCC VR-885 / DSM 19411 / UW-3/Cx).